A 77-amino-acid polypeptide reads, in one-letter code: MFPGGISMTELIIILAVILLLFGAGRLPEAGRALGEGIRNFRKALSGETEVKEVKAEDVKTEERKEEKKEEKEKVEA.

Residues 2–22 form a helical membrane-spanning segment; it reads FPGGISMTELIIILAVILLLF. The disordered stretch occupies residues 52–77; that stretch reads KEVKAEDVKTEERKEEKKEEKEKVEA.

The protein belongs to the TatA/E family. In terms of assembly, forms a complex with TatC.

It localises to the cell inner membrane. Its function is as follows. Part of the twin-arginine translocation (Tat) system that transports large folded proteins containing a characteristic twin-arginine motif in their signal peptide across membranes. TatA could form the protein-conducting channel of the Tat system. The protein is Sec-independent protein translocase protein TatA 2 of Aquifex aeolicus (strain VF5).